Reading from the N-terminus, the 226-residue chain is Leucyl/phenylalanyl-tRNA--protein transferase (226 aa).

The protein belongs to the L/F-transferase family.

It is found in the cytoplasm. The enzyme catalyses N-terminal L-lysyl-[protein] + L-leucyl-tRNA(Leu) = N-terminal L-leucyl-L-lysyl-[protein] + tRNA(Leu) + H(+). It carries out the reaction N-terminal L-arginyl-[protein] + L-leucyl-tRNA(Leu) = N-terminal L-leucyl-L-arginyl-[protein] + tRNA(Leu) + H(+). It catalyses the reaction L-phenylalanyl-tRNA(Phe) + an N-terminal L-alpha-aminoacyl-[protein] = an N-terminal L-phenylalanyl-L-alpha-aminoacyl-[protein] + tRNA(Phe). In terms of biological role, functions in the N-end rule pathway of protein degradation where it conjugates Leu, Phe and, less efficiently, Met from aminoacyl-tRNAs to the N-termini of proteins containing an N-terminal arginine or lysine. In Bradyrhizobium diazoefficiens (strain JCM 10833 / BCRC 13528 / IAM 13628 / NBRC 14792 / USDA 110), this protein is Leucyl/phenylalanyl-tRNA--protein transferase.